A 239-amino-acid polypeptide reads, in one-letter code: MSLRGQVQIARSVFLLRIYILIWVQCLILMSVCAFCWLVLPHRLEQLFSSVRLTLSCLMISIVCLGLLRWAEPNFPKNVWILLTYTLLTSVAVTASGFHFSHRSVIYAMVATVTLFCFLTLATYLFARDVELQRSLLTGASTLILLLFAVFSLFPEAVSEILVMIAGLAVIVTSVVCDTQDILHDIEYESYIPGALCLYMDLMYLFVSVLYFMPSEPGSAHTAQTTVAATAAASPQFVS.

Helical transmembrane passes span 20–40, 48–68, 80–100, 106–126, 143–163, 164–184, and 192–212; these read ILIW…WLVL, FSSV…LGLL, WILL…GFHF, IYAM…TYLF, LILL…EILV, MIAG…DILH, and IPGA…VLYF.

It belongs to the cytomegalovirus US12 family.

It is found in the membrane. This is an uncharacterized protein from Homo sapiens (Human).